A 424-amino-acid polypeptide reads, in one-letter code: Histidine--tRNA ligase (424 aa).

It belongs to the class-II aminoacyl-tRNA synthetase family. Homodimer.

The protein localises to the cytoplasm. It carries out the reaction tRNA(His) + L-histidine + ATP = L-histidyl-tRNA(His) + AMP + diphosphate + H(+). This Protochlamydia amoebophila (strain UWE25) protein is Histidine--tRNA ligase.